The primary structure comprises 76 residues: Conotoxin Cal5a L3 (76 aa).

Positions 1–22 (MRFYIGLMAALMLTSVLRTDSA) are cleaved as a signal peptide. Positions 23 to 42 (SVGQTGTKSELAVIERVIRQ) are excised as a propeptide. 4-hydroxyproline is present on P50. 4-hydroxyproline; partial occurs at positions 58, 62, and 64.

The protein belongs to the conotoxin T superfamily. Contains 2 disulfide bonds that can be either 'C1-C3, C2-C4' or 'C1-C4, C2-C3', since these disulfide connectivities have been observed for conotoxins with cysteine framework V (for examples, see AC P0DQQ7 and AC P81755). In terms of tissue distribution, expressed by the venom duct.

It localises to the secreted. Probable neurotoxin with unknown target. Possibly targets ion channels. This chain is Conotoxin Cal5a L3, found in Californiconus californicus (California cone).